A 280-amino-acid polypeptide reads, in one-letter code: Fructose-1,6-bisphosphatase class 1 (280 aa).

The Mg(2+) site is built by Glu-64, Asp-83, Leu-85, and Asp-86. Residues 86-89 (DGSS), Tyr-189, and Lys-220 each bind substrate. Glu-226 serves as a coordination point for Mg(2+).

This sequence belongs to the FBPase class 1 family. As to quaternary structure, homotetramer. It depends on Mg(2+) as a cofactor.

Its subcellular location is the cytoplasm. It catalyses the reaction beta-D-fructose 1,6-bisphosphate + H2O = beta-D-fructose 6-phosphate + phosphate. The protein operates within carbohydrate biosynthesis; gluconeogenesis. This Campylobacter jejuni subsp. jejuni serotype O:2 (strain ATCC 700819 / NCTC 11168) protein is Fructose-1,6-bisphosphatase class 1.